Reading from the N-terminus, the 375-residue chain is Regulatory protein E2 (375 aa).

The segment at 1–200 (MENLCQRLNA…QVICCPEFVS (200 aa)) is transactivation domain. Residues 264–292 (ATQPGQSVDYTNNNLHSTSGGHHPGRDTS) form a disordered region. Positions 266 to 283 (QPGQSVDYTNNNLHSTSG) are enriched in polar residues. The DNA-binding domain stretch occupies residues 296 to 375 (TVFIVHLKGD…ITSTLGIMSL (80 aa)). K303 participates in a covalent cross-link: Glycyl lysine isopeptide (Lys-Gly) (interchain with G-Cter in SUMO).

It belongs to the papillomaviridae E2 protein family. In terms of assembly, binds DNA as homodimer. Interacts with protein E1; this interaction greatly increases E1 DNA-binding activity. Interacts with protein L1; this interaction enhances E2-dependent replication and transcription activation. Interacts with protein L2; this interaction inhibits E2 transcriptional activity but not DNA replication function E2. Interacts with protein E7; this interaction inhibits E7 oncogenic activity. Interacts with host TAF1; this interaction modulates E2-dependent transcriptional regulation. Interacts with host BRD4; this interaction mediates E2 transcriptional activation function. Additionally, the interaction with host BRD4 on mitotic chromosomes mediates tethering of the viral genome. Interacts with host TOPBP1; this interaction is required for optimal viral DNA replication. In terms of processing, phosphorylated. Post-translationally, sumoylation plays a regulatory role in E2 transcriptional activity.

Its subcellular location is the host nucleus. Plays a role in the initiation of viral DNA replication. A dimer of E2 interacts with a dimer of E1 in order to improve specificity of E1 DNA binding activity. Once the complex recognizes and binds DNA at specific sites, the E2 dimer is removed from DNA. E2 also regulates viral transcription through binding to the E2RE response element (5'-ACCNNNNNNGGT-3') present in multiple copies in the regulatory regions of the viral genome. Activates or represses transcription depending on E2RE's position with regards to proximal promoter elements including the TATA-box. Repression occurs by sterically hindering the assembly of the transcription initiation complex. This Human papillomavirus type 26 protein is Regulatory protein E2.